The chain runs to 1391 residues: Periaxin (1391 aa).

Position 7 is a phosphoserine (S7). Residues 16-99 (LVEIIVETEA…YKVSFCLKRT (84 aa)) enclose the PDZ domain. The short motif at 70 to 84 (VFFENFKYEDALRLL) is the Nuclear export signal element. The Nuclear localization signal motif lies at 118–196 (KGPRAKVAKL…RLQLPRLRVR (79 aa)). Phosphoserine is present on S243. Tandem repeats lie at residues 432–436 (GPEVK), 440–444 (GPEVK), 448–452 (VPEVK), 456–460 (VPEAA), 464–468 (VQLPE), 469–473 (VQLPK), 474–478 (MSDMK), 482–486 (IPEMV), 487–491 (VPDVR), 495–499 (VQLPK), 500–504 (VPEMK), and 508–512 (MKLPK). The 45 X 5 AA approximate tandem repeats of [LVMGIED]-[PQSKHARMI]-[EDKLVTR]-[LIVMAP]-[AQKHRPEVSD]; that may have a tripeptide spacer of [LVIDEA]-[PMSVI]-[KEATDQ] stretch occupies residues 432-719 (GPEVKAPTGP…MQVSQVPEVQ (288 aa)). The 13; approximate repeat unit spans residues 513 to 517 (WPEMA). Repeat copies occupy residues 521–525 (VHLPD), 526–530 (VQLPK), 534–538 (MKLPK), 539–543 (VPEMA), 547–551 (VHLPD), 552–556 (VQLPK), 560–564 (MKLPE), 565–569 (MKLPK), 573–577 (MAVPD), 578–582 (VRLPE), 583–587 (VQLPK), 591–595 (VKLPK), 596–600 (MPEMA), 601–605 (VPDVH), 609–613 (LQLPK), 614–618 (MSEVK), 619–623 (LPKMP), 627–631 (VPDVR), 632–636 (LPEVQ), 637–641 (LPKVS), 645–649 (LPKMP), 650–654 (EMTMP), 655–659 (DIRLP), 663–667 (LPKVP), 671–675 (LPEMK), 676–680 (LPEIK), 684–688 (VPDMA), 689–693 (VPDVP), 697–701 (LQLPK), 702–706 (VSDIR), 707–711 (LPEMQ), and 715–719 (VPEVQ). S848, S979, S1028, S1279, S1283, S1285, S1293, S1331, and S1337 each carry phosphoserine. A disordered region spans residues 1267–1366 (LPRVGFSQSE…DREEGGFRVR (100 aa)). A compositionally biased stretch (low complexity) spans 1275-1285 (SESVSGEGSPS). The segment covering 1354–1363 (GSRDREEGGF) has biased composition (basic and acidic residues). S1369 is modified (phosphoserine).

The protein belongs to the periaxin family. In terms of assembly, homodimer (via PDZ domain). Interacts with SCN10A. Found in a complex with SCN10A. Interacts with DRP2. Identified in a dystroglycan complex that contains at least PRX, DRP2, UTRN, DMD and DAG1. Detected in a complex composed of at least EZR, AHNAK, PPL and PRX. Identified in a complex with EZR, AHNAK, BFSP1, BFSP2, ANK2, PLEC, VIM and spectrin. In terms of tissue distribution, detected in myelinating Schwann cells in intramuscular nerves in triangularis sterni. Detected in sciatic nerve. Detected in eye lens fiber cells. Isoform 1 is detected in myelinating Schwann cells in sciatic nerve. Isoform 2 is detected in myelinating Schwann cells in sciatic nerve (at protein level). Detected in sciatic nerve.

It is found in the cell membrane. The protein localises to the cell junction. It localises to the nucleus. Its subcellular location is the cytoplasm. In terms of biological role, scaffolding protein that functions as part of a dystroglycan complex in Schwann cells, and as part of EZR and AHNAK-containing complexes in eye lens fiber cells. Required for the maintenance of the peripheral myelin sheath that is essential for normal transmission of nerve impulses and normal perception of sensory stimuli. Required for normal transport of MBP mRNA from the perinuclear to the paranodal regions. Required for normal remyelination after nerve injury. Required for normal elongation of Schwann cells and normal length of the internodes between the nodes of Ranvier. The demyelinated nodes of Ranvier permit saltatory transmission of nerve impulses; shorter internodes cause slower transmission of nerve impulses. Required for the formation of appositions between the abaxonal surface of the myelin sheath and the Schwann cell plasma membrane; the Schwann cell cytoplasm is restricted to regions between these appositions. Required for the formation of Cajal bands and of Schmidt-Lanterman incisures that correspond to short, cytoplasm-filled regions on myelinated nerves. Recruits DRP2 to the Schwann cell plasma membrane. Required for normal protein composition of the eye lens fiber cell plasma membrane and normal eye lens fiber cell morphology. This chain is Periaxin (Prx), found in Mus musculus (Mouse).